A 334-amino-acid chain; its full sequence is Probable tRNA pseudouridine synthase B (334 aa).

The Nucleophile role is filled by D82. The region spanning 250–325 is the PUA domain; it reads LPKVWIRDSA…IAVDVDKVFM (76 aa).

The protein belongs to the pseudouridine synthase TruB family. Type 2 subfamily.

It carries out the reaction uridine(55) in tRNA = pseudouridine(55) in tRNA. Functionally, could be responsible for synthesis of pseudouridine from uracil-55 in the psi GC loop of transfer RNAs. The sequence is that of Probable tRNA pseudouridine synthase B from Thermococcus onnurineus (strain NA1).